Here is a 360-residue protein sequence, read N- to C-terminus: Peptide chain release factor 1 (360 aa).

The residue at position 236 (glutamine 236) is an N5-methylglutamine.

It belongs to the prokaryotic/mitochondrial release factor family. Post-translationally, methylated by PrmC. Methylation increases the termination efficiency of RF1.

It localises to the cytoplasm. In terms of biological role, peptide chain release factor 1 directs the termination of translation in response to the peptide chain termination codons UAG and UAA. This chain is Peptide chain release factor 1, found in Ligilactobacillus salivarius (strain UCC118) (Lactobacillus salivarius).